A 360-amino-acid chain; its full sequence is Membrane-bound lytic murein transglycosylase C (360 aa).

Positions 1-16 (MKKYLALALIAPLLVS) are cleaved as a signal peptide. Cysteine 17 carries N-palmitoyl cysteine lipidation. Cysteine 17 carries S-diacylglycerol cysteine lipidation.

Belongs to the transglycosylase Slt family.

It is found in the cell outer membrane. It catalyses the reaction Exolytic cleavage of the (1-&gt;4)-beta-glycosidic linkage between N-acetylmuramic acid (MurNAc) and N-acetylglucosamine (GlcNAc) residues in peptidoglycan, from either the reducing or the non-reducing ends of the peptidoglycan chains, with concomitant formation of a 1,6-anhydrobond in the MurNAc residue.. Murein-degrading enzyme. May play a role in recycling of muropeptides during cell elongation and/or cell division. The chain is Membrane-bound lytic murein transglycosylase C from Klebsiella pneumoniae subsp. pneumoniae (strain ATCC 700721 / MGH 78578).